We begin with the raw amino-acid sequence, 1213 residues long: SWI/SNF complex subunit SMARCC2 (1213 aa).

The interval 1-274 (MAVRKKDGGP…PVSRRKKISA (274 aa)) is marR-like, BRCT and chromo domains module. The region spanning 10 to 136 (PNVKYYEAAD…IEKSLVQNNC (127 aa)) is the MarR-like domain. Positions 140–183 (PNIFLCPEIEPKLLGKLKDIVKRHQGTISEDKSNASHVVYPVPG) constitute a BRCT; N-terminus domain. A Chromo domain is found at 189-217 (EWVRPVMKRDKQVLLHWGYYPDSYDTWIP). The BRCT; C-terminus domain occupies 233-257 (KPRKVHAKWILDTDTFNEWMNEEDY). The interval 256-413 (DYEVSDDKSP…GEQTKNPDLH (158 aa)) is disordered. Residues 275–284 (KTLTDEVNSP) are compositionally biased toward polar residues. Ser283, Ser286, Ser302, Ser304, and Ser306 each carry phosphoserine. Lys312 is modified (N6-(ADP-ribosyl)lysine). The residue at position 326 (Lys326) is an N6-acetyllysine. The span at 331-344 (HREEEQEDLTKDMD) shows a compositional bias: basic and acidic residues. Phosphoserine occurs at positions 347 and 387. Positions 379-398 (DLDEQDDESMETTGKDEDEN) are enriched in acidic residues. The 98-residue stretch at 424 to 521 (IIIPSYAAWF…YQVDAESRPT (98 aa)) folds into the SWIRM domain. Glycyl lysine isopeptide (Lys-Gly) (interchain with G-Cter in SUMO2) cross-links involve residues Lys564, Lys566, Lys568, and Lys592. Residues 596 to 647 (SATREWTEQETLLLLEALEMYKDDWNKVSEHVGSRTQDECILHFLRLPIEDP) enclose the SANT domain. A Glycyl lysine isopeptide (Lys-Gly) (interchain with G-Cter in SUMO2) cross-link involves residue Lys704. The disordered stretch occupies residues 724–848 (KVTGKADPAF…AEPEGERKTK (125 aa)). A compositionally biased stretch (basic and acidic residues) spans 747–777 (EPERIEESGTEEARPEGQAADEKKEPKEPRE). A Glycyl lysine isopeptide (Lys-Gly) (interchain with G-Cter in SUMO2) cross-link involves residue Lys787. Basic and acidic residues predominate over residues 788–848 (EEISEVPKKD…AEPEGERKTK (61 aa)). Residue Ser813 is modified to Phosphoserine. Lys848 is covalently cross-linked (Glycyl lysine isopeptide (Lys-Gly) (interchain with G-Cter in SUMO2)). A coiled-coil region spans residues 907–934 (EELETIMDREREALEYQRQQLLADRQAF). 2 disordered regions span residues 947–1073 (RQQH…HPGV) and 1181–1213 (LPSA…PPPQ). Residues 949 to 962 (QHFQQMHQQQQQQP) are compositionally biased toward low complexity. A compositionally biased stretch (pro residues) spans 963–974 (PTLPPGSQPIPP). The span at 975–1033 (TGAAGPPTVHGLAVPPAAVASAPPGSGAPPGSLGPSEQIGQAGTTAGPQQPQQAGAPQP) shows a compositional bias: low complexity. 2 stretches are compositionally biased toward pro residues: residues 1034 to 1060 (GAVP…PPSM) and 1185 to 1201 (SPLP…PTAP).

This sequence belongs to the SMARCC family. Component of the multiprotein chromatin-remodeling complexes SWI/SNF: SWI/SNF-A (BAF), SWI/SNF-B (PBAF) and related complexes. The canonical complex contains a catalytic subunit (either SMARCA4/BRG1/BAF190A or SMARCA2/BRM/BAF190B) and at least SMARCE1, ACTL6A/BAF53, SMARCC1/BAF155, SMARCC2/BAF170, and SMARCB1/SNF5/BAF47. Other subunits specific to each of the complexes may also be present permitting several possible combinations developmentally and tissue specific. Component of the BAF complex, which includes at least actin (ACTB), ARID1A/BAF250A, ARID1B/BAF250B, SMARCA2/BRM, SMARCA4/BRG1, ACTL6A/BAF53, ACTL6B/BAF53B, SMARCE1/BAF57, SMARCC1/BAF155, SMARCC2/BAF170, SMARCB1/SNF5/INI1, and one or more SMARCD1/BAF60A, SMARCD2/BAF60B, or SMARCD3/BAF60C. In muscle cells, the BAF complex also contains DPF3. Component of neural progenitors-specific chromatin remodeling complex (npBAF complex) composed of at least, ARID1A/BAF250A or ARID1B/BAF250B, SMARCD1/BAF60A, SMARCD3/BAF60C, SMARCA2/BRM/BAF190B, SMARCA4/BRG1/BAF190A, SMARCB1/BAF47, SMARCC1/BAF155, SMARCE1/BAF57, SMARCC2/BAF170, PHF10/BAF45A, ACTL6A/BAF53A and actin. Component of neuron-specific chromatin remodeling complex (nBAF complex) composed of at least, ARID1A/BAF250A or ARID1B/BAF250B, SMARCD1/BAF60A, SMARCD3/BAF60C, SMARCA2/BRM/BAF190B, SMARCA4/BRG1/BAF190A, SMARCB1/BAF47, SMARCC1/BAF155, SMARCE1/BAF57, SMARCC2/BAF170, DPF1/BAF45B, DPF3/BAF45C, ACTL6B/BAF53B and actin. Component of the SWI/SNF-B (PBAF) chromatin remodeling complex, at least composed of SMARCA4/BRG1, SMARCB1/BAF47/SNF5, ACTL6A/BAF53A or ACTL6B/BAF53B, SMARCE1/BAF57, SMARCD1/BAF60A, SMARCD2/BAF60B, perhaps SMARCD3/BAF60C, SMARCC1/BAF155, SMARCC2/BAF170, PBRM1/BAF180, ARID2/BAF200 and actin. May also interact with the SIN3A histone deacetylase transcription repressor complex in conjunction with SMARCA2 and SMARCA4. Interacts with SMARD1. Interacts with KDM6B. Interaction with RCOR1. Interacts with DPF2. Interacts with ERCC6. Interacts with FOS. In terms of processing, mono-ADP-ribosylation at Lys-312 by SIRT6 promotes recruitment to the enhancer region of the Heme oxygenase-1 (HO-1) locus, leading to transcription activation of the locus.

The protein resides in the nucleus. Involved in transcriptional activation and repression of select genes by chromatin remodeling (alteration of DNA-nucleosome topology). Component of SWI/SNF chromatin remodeling complexes that carry out key enzymatic activities, changing chromatin structure by altering DNA-histone contacts within a nucleosome in an ATP-dependent manner. Can stimulate the ATPase activity of the catalytic subunit of these complexes. May be required for CoREST dependent repression of neuronal specific gene promoters in non-neuronal cells. Belongs to the neural progenitors-specific chromatin remodeling complex (npBAF complex) and the neuron-specific chromatin remodeling complex (nBAF complex). During neural development a switch from a stem/progenitor to a postmitotic chromatin remodeling mechanism occurs as neurons exit the cell cycle and become committed to their adult state. The transition from proliferating neural stem/progenitor cells to postmitotic neurons requires a switch in subunit composition of the npBAF and nBAF complexes. As neural progenitors exit mitosis and differentiate into neurons, npBAF complexes which contain ACTL6A/BAF53A and PHF10/BAF45A, are exchanged for homologous alternative ACTL6B/BAF53B and DPF1/BAF45B or DPF3/BAF45C subunits in neuron-specific complexes (nBAF). The npBAF complex is essential for the self-renewal/proliferative capacity of the multipotent neural stem cells. The nBAF complex along with CREST plays a role regulating the activity of genes essential for dendrite growth. Critical regulator of myeloid differentiation, controlling granulocytopoiesis and the expression of genes involved in neutrophil granule formation. This Mus musculus (Mouse) protein is SWI/SNF complex subunit SMARCC2 (Smarcc2).